Here is a 344-residue protein sequence, read N- to C-terminus: MMVIRPVERSDVSALMQLASKTGGGLTSLPANEATLSVRIERAIKTWQGELPKSEQGYVFVLEDSETGTVAGICAIEVAVGLNDPWYNYRVGTLVHASKELNVYNALPTLFLSNDHTGSSELCTLFLDPEWRKEGNGYLLSKSRFMFMAAFRDKFNDKVVAEMRGVIDEHGYSPFWQSLGKRFFSMDFSRADFLCGTGQKAFIAELMPKHPIYTHFLSQEAQDVIGQVHPQTAPARAVLEKEGFRYRNYIDIFDGGPTLECDIDRVRAIRKSRLVEVAEGQPAQGDFPACLVANENYHHFRVVLVRTDPATERLILTAAQLDALKCHAGDRVRLVRLCAEEKTA.

Residue leucine 125 participates in succinyl-CoA binding. Histidine 229 functions as the Proton donor in the catalytic mechanism.

It belongs to the arginine N-succinyltransferase family.

The enzyme catalyses succinyl-CoA + L-arginine = N(2)-succinyl-L-arginine + CoA + H(+). It functions in the pathway amino-acid degradation; L-arginine degradation via AST pathway; L-glutamate and succinate from L-arginine: step 1/5. Catalyzes the transfer of succinyl-CoA to arginine to produce N(2)-succinylarginine. This is Arginine N-succinyltransferase from Escherichia coli O127:H6 (strain E2348/69 / EPEC).